The sequence spans 335 residues: 3-hydroxy-3-methylglutaryl-CoA lyase, cytoplasmic (335 aa).

A lipid anchor (N-myristoyl glycine) is attached at G2. The Pyruvate carboxyltransferase domain occupies 43-310; that stretch reads VKIVEVGPRD…ETGVDLLKVM (268 aa). R51 provides a ligand contact to substrate. Position 52 (D52) interacts with a divalent metal cation. K58 is subject to N6-acetyllysine. Residues H243 and H245 each contribute to the a divalent metal cation site. C276 is a catalytic residue. N285 serves as a coordination point for a divalent metal cation.

Belongs to the HMG-CoA lyase family. The cofactor is a divalent metal cation.

It localises to the cytoplasm. The protein resides in the cytosol. Its subcellular location is the endoplasmic reticulum membrane. It catalyses the reaction (3S)-3-hydroxy-3-methylglutaryl-CoA = acetoacetate + acetyl-CoA. The protein operates within metabolic intermediate metabolism; (S)-3-hydroxy-3-methylglutaryl-CoA degradation; acetoacetate from (S)-3-hydroxy-3-methylglutaryl-CoA: step 1/1. In terms of biological role, non-mitochondrial 3-hydroxy-3-methylglutaryl-CoA lyase that catalyzes a cation-dependent cleavage of (S)-3-hydroxy-3-methylglutaryl-CoA into acetyl-CoA and acetoacetate, a key step in ketogenesis, the products of which support energy production in nonhepatic animal tissues. In Danio rerio (Zebrafish), this protein is 3-hydroxy-3-methylglutaryl-CoA lyase, cytoplasmic (hmgcll1).